The following is a 724-amino-acid chain: Catalase-peroxidase (724 aa).

A cross-link (tryptophyl-tyrosyl-methioninium (Trp-Tyr) (with M-252)) is located at residues 98-226 (WHSAGSYRLA…LAAVQMGLIY (129 aa)). The Proton acceptor role is filled by H99. Residues 226-252 (YVNPEGVNGKPDPLKTAAQVRTTFARM) constitute a cross-link (tryptophyl-tyrosyl-methioninium (Tyr-Met) (with W-98)). Residue H267 coordinates heme b.

The protein belongs to the peroxidase family. Peroxidase/catalase subfamily. In terms of assembly, homodimer or homotetramer. Heme b is required as a cofactor. Post-translationally, formation of the three residue Trp-Tyr-Met cross-link is important for the catalase, but not the peroxidase activity of the enzyme.

It carries out the reaction H2O2 + AH2 = A + 2 H2O. The enzyme catalyses 2 H2O2 = O2 + 2 H2O. Its function is as follows. Bifunctional enzyme with both catalase and broad-spectrum peroxidase activity. In Maricaulis maris (strain MCS10) (Caulobacter maris), this protein is Catalase-peroxidase.